The chain runs to 106 residues: Iron-sulfur cluster assembly protein CyaY (106 aa).

The protein belongs to the frataxin family.

Involved in iron-sulfur (Fe-S) cluster assembly. May act as a regulator of Fe-S biogenesis. In Salmonella paratyphi B (strain ATCC BAA-1250 / SPB7), this protein is Iron-sulfur cluster assembly protein CyaY.